Reading from the N-terminus, the 361-residue chain is Queuine tRNA-ribosyltransferase (361 aa).

Asp-92 acts as the Proton acceptor in catalysis. Substrate-binding positions include 92 to 96 (DSGGF), Asp-146, Gln-189, and Gly-216. Residues 247-253 (GVGKPSD) form an RNA binding region. The Nucleophile role is filled by Asp-266. Positions 271-275 (TRSGR) are RNA binding; important for wobble base 34 recognition. Cys-304, Cys-306, Cys-309, and His-335 together coordinate Zn(2+).

The protein belongs to the queuine tRNA-ribosyltransferase family. In terms of assembly, homodimer. Within each dimer, one monomer is responsible for RNA recognition and catalysis, while the other monomer binds to the replacement base PreQ1. Zn(2+) serves as cofactor.

The catalysed reaction is 7-aminomethyl-7-carbaguanine + guanosine(34) in tRNA = 7-aminomethyl-7-carbaguanosine(34) in tRNA + guanine. It functions in the pathway tRNA modification; tRNA-queuosine biosynthesis. Its function is as follows. Catalyzes the base-exchange of a guanine (G) residue with the queuine precursor 7-aminomethyl-7-deazaguanine (PreQ1) at position 34 (anticodon wobble position) in tRNAs with GU(N) anticodons (tRNA-Asp, -Asn, -His and -Tyr). Catalysis occurs through a double-displacement mechanism. The nucleophile active site attacks the C1' of nucleotide 34 to detach the guanine base from the RNA, forming a covalent enzyme-RNA intermediate. The proton acceptor active site deprotonates the incoming PreQ1, allowing a nucleophilic attack on the C1' of the ribose to form the product. After dissociation, two additional enzymatic reactions on the tRNA convert PreQ1 to queuine (Q), resulting in the hypermodified nucleoside queuosine (7-(((4,5-cis-dihydroxy-2-cyclopenten-1-yl)amino)methyl)-7-deazaguanosine). In Rickettsia prowazekii (strain Madrid E), this protein is Queuine tRNA-ribosyltransferase.